The sequence spans 409 residues: Histidine--tRNA ligase (409 aa).

It belongs to the class-II aminoacyl-tRNA synthetase family.

It localises to the cytoplasm. The catalysed reaction is tRNA(His) + L-histidine + ATP = L-histidyl-tRNA(His) + AMP + diphosphate + H(+). This Methanosphaerula palustris (strain ATCC BAA-1556 / DSM 19958 / E1-9c) protein is Histidine--tRNA ligase.